Consider the following 334-residue polypeptide: GTP 3',8-cyclase (334 aa).

Residues 11–235 (GFNRKVDYLR…VESAESSQGP (225 aa)) enclose the Radical SAM core domain. R20 contributes to the GTP binding site. [4Fe-4S] cluster is bound by residues C27 and C31. Y33 contacts S-adenosyl-L-methionine. C34 is a binding site for [4Fe-4S] cluster. R69 contributes to the GTP binding site. G73 contacts S-adenosyl-L-methionine. T100 contributes to the GTP binding site. S124 contacts S-adenosyl-L-methionine. GTP is bound at residue K161. An S-adenosyl-L-methionine-binding site is contributed by M195. Positions 260 and 263 each coordinate [4Fe-4S] cluster. 265–267 (RVR) contacts GTP. C277 lines the [4Fe-4S] cluster pocket.

The protein belongs to the radical SAM superfamily. MoaA family. Monomer and homodimer. [4Fe-4S] cluster is required as a cofactor.

It carries out the reaction GTP + AH2 + S-adenosyl-L-methionine = (8S)-3',8-cyclo-7,8-dihydroguanosine 5'-triphosphate + 5'-deoxyadenosine + L-methionine + A + H(+). It participates in cofactor biosynthesis; molybdopterin biosynthesis. Functionally, catalyzes the cyclization of GTP to (8S)-3',8-cyclo-7,8-dihydroguanosine 5'-triphosphate. This is GTP 3',8-cyclase from Pseudomonas entomophila (strain L48).